Reading from the N-terminus, the 273-residue chain is Undecaprenyl-diphosphatase (273 aa).

A run of 7 helical transmembrane segments spans residues 4–24, 43–63, 83–103, 109–129, 184–204, 218–238, and 248–268; these read FLLL…FLPI, KGKV…CWEY, FVLN…LFIK, LFHP…ILWA, ATEF…FYDL, VFAI…RGLL, and VFAW…YSGM.

Belongs to the UppP family.

The protein localises to the cell inner membrane. The catalysed reaction is di-trans,octa-cis-undecaprenyl diphosphate + H2O = di-trans,octa-cis-undecaprenyl phosphate + phosphate + H(+). Catalyzes the dephosphorylation of undecaprenyl diphosphate (UPP). Confers resistance to bacitracin. This chain is Undecaprenyl-diphosphatase, found in Nitrosospira multiformis (strain ATCC 25196 / NCIMB 11849 / C 71).